The primary structure comprises 183 residues: MRSVITGVAGVGKTTVLDIVSKETGIKIVNYGTLMFDLAKKRGLVENRDQMRKLSRDIQIDLQKNAATEIGRMEDVIVDTHMSIKTPFGYLPGLPEWVLREINASAFIIIEADPELILRRRQNDPTRARDEDSVESIREHQEINRAFAAAYSIFSGATVKIITNEEGKPDKAAHDIIKVIAVD.

ATP is bound at residue G7–T15.

It belongs to the archaeal adenylate kinase family.

The protein localises to the cytoplasm. The enzyme catalyses AMP + ATP = 2 ADP. This is Adenylate kinase (adkA) from Thermoplasma acidophilum (strain ATCC 25905 / DSM 1728 / JCM 9062 / NBRC 15155 / AMRC-C165).